Consider the following 198-residue polypeptide: ATP synthase protein MI25 (198 aa).

The chain crosses the membrane as a helical span at residues 29–49 (ISIYNEEMIVALCFIGFIIFS).

Belongs to the ATPase protein MI25 family. In terms of assembly, F-type ATPases have 2 components, CF(1) - the catalytic core - and CF(0) - the membrane proton channel. CF(1) has five subunits: alpha(3), beta(3), gamma(1), delta(1), epsilon(1). CF(0) has three main subunits: a, b and c.

It is found in the mitochondrion membrane. Functionally, this is one of the chains of the nonenzymatic component (CF(0) subunit) of the mitochondrial ATPase complex. In Nicotiana tabacum (Common tobacco), this protein is ATP synthase protein MI25.